Here is a 195-residue protein sequence, read N- to C-terminus: MRVKATLINFKSKLSKSCNRFVSLFRFRVKRPVFIRPLRARHGNVKPRHQHHHSKKPICSCLCFLNSSKNHKMSNAKHRSSSFSVNDDDYSKFMQSPLTPATAKKLFTSPITTPYSSRTRKSLNARDTFEDNAVEDACRSFENYLIHLIVEEGKIDDLMDIEELLFCWKNLKSPVFIELVSRFYGELCRDLFSGE.

In terms of domain architecture, OVATE spans 130 to 190 (EDNAVEDACR…SRFYGELCRD (61 aa)).

The protein localises to the nucleus. Functionally, transcriptional repressor that may regulate multiple aspects of plant growth and development through the regulation of BEL1-LIKE (BLH) and KNOX TALE (KNAT) homeodomain transcription factors. The sequence is that of Transcription repressor OFP17 (OFP17) from Arabidopsis thaliana (Mouse-ear cress).